A 564-amino-acid polypeptide reads, in one-letter code: Esterase FE4 (564 aa).

An N-terminal signal peptide occupies residues 1 to 23 (MKNTCGILLNLFLFIGCFLTCSA). Asparagine 81 is a glycosylation site (N-linked (GlcNAc...) asparagine). Cysteines 89 and 106 form a disulfide. The active-site Acyl-ester intermediate is serine 214. A disulfide bridge connects residues cysteine 266 and cysteine 277. The N-linked (GlcNAc...) asparagine glycan is linked to asparagine 269. The active-site Charge relay system is glutamate 339. 3 N-linked (GlcNAc...) asparagine glycosylation sites follow: asparagine 371, asparagine 404, and asparagine 443. The active-site Charge relay system is the histidine 463.

This sequence belongs to the type-B carboxylesterase/lipase family.

It catalyses the reaction a carboxylic ester + H2O = an alcohol + a carboxylate + H(+). Its function is as follows. Overproduction of nonspecific esterases is a common mechanism of resistance to organophosphate insecticides. In Myzus persicae (Green peach aphid), this protein is Esterase FE4.